The chain runs to 1039 residues: Alpha-mannosidase 2C1 (1039 aa).

The Co(2+) site is built by H259, D261, D371, and H576. D371 acts as the Nucleophile in catalysis.

This sequence belongs to the glycosyl hydrolase 38 family. Co(2+) serves as cofactor. Expressed in kidney and liver (at protein level). Widely expressed, with highest levels in lung, ovary and testis. Also detected at lower levels in heart, brain, liver, spleen, kidney and thymus.

It is found in the cytoplasm. The catalysed reaction is Hydrolysis of terminal, non-reducing alpha-D-mannose residues in alpha-D-mannosides.. Inhibited by 1,4-dideoxy-1,4-imino-d-mannitol (DIM) and EDTA. Functionally, cleaves alpha 1,2-, alpha 1,3-, and alpha 1,6-linked mannose residues from glycoproteins. Involved in the degradation of free oligosaccharides in the cytoplasm. The protein is Alpha-mannosidase 2C1 of Mus musculus (Mouse).